The sequence spans 226 residues: 7-cyano-7-deazaguanine synthase (226 aa).

Ile8–Leu18 contacts ATP. Zn(2+) is bound by residues Cys188, Cys198, Cys201, and Cys204.

Belongs to the QueC family. Zn(2+) serves as cofactor.

The catalysed reaction is 7-carboxy-7-deazaguanine + NH4(+) + ATP = 7-cyano-7-deazaguanine + ADP + phosphate + H2O + H(+). It participates in purine metabolism; 7-cyano-7-deazaguanine biosynthesis. Catalyzes the ATP-dependent conversion of 7-carboxy-7-deazaguanine (CDG) to 7-cyano-7-deazaguanine (preQ(0)). The protein is 7-cyano-7-deazaguanine synthase of Coxiella burnetii (strain RSA 331 / Henzerling II).